The chain runs to 81 residues: MVLYALFYVFLVLFIFFDSFKQESNKLELSGKEERKLGNGGDRLTRDFLDPLYEEFEESSSESSDVNFHQVNLSIRICFSF.

Belongs to the ycf70 family.

It localises to the plastid. The protein localises to the chloroplast. This is an uncharacterized protein from Saccharum officinarum (Sugarcane).